The sequence spans 255 residues: Small ribosomal subunit protein eS1B (255 aa).

Ala-2 carries the post-translational modification N-acetylalanine; partial. Ser-245 carries the phosphoserine modification. A Glycyl lysine isopeptide (Lys-Gly) (interchain with G-Cter in ubiquitin) cross-link involves residue Lys-248. Phosphothreonine is present on Thr-254.

This sequence belongs to the eukaryotic ribosomal protein eS1 family. As to quaternary structure, component of the small ribosomal subunit. Mature ribosomes consist of a small (40S) and a large (60S) subunit. The 40S subunit contains about 33 different proteins and 1 molecule of RNA (18S). The 60S subunit contains about 49 different proteins and 3 molecules of RNA (25S, 5.8S and 5S).

It localises to the cytoplasm. The sequence is that of Small ribosomal subunit protein eS1B from Saccharomyces cerevisiae (strain RM11-1a) (Baker's yeast).